The primary structure comprises 440 residues: Asparagine--tRNA ligase (440 aa).

It belongs to the class-II aminoacyl-tRNA synthetase family. Homodimer.

The protein localises to the cytoplasm. The catalysed reaction is tRNA(Asn) + L-asparagine + ATP = L-asparaginyl-tRNA(Asn) + AMP + diphosphate + H(+). In Roseiflexus sp. (strain RS-1), this protein is Asparagine--tRNA ligase.